A 585-amino-acid polypeptide reads, in one-letter code: A-type ATP synthase subunit A (585 aa).

231 to 238 lines the ATP pocket; that stretch reads GPFGSGKT.

This sequence belongs to the ATPase alpha/beta chains family. In terms of assembly, has multiple subunits with at least A(3), B(3), C, D, E, F, H, I and proteolipid K(x).

The protein resides in the cell membrane. The catalysed reaction is ATP + H2O + 4 H(+)(in) = ADP + phosphate + 5 H(+)(out). Component of the A-type ATP synthase that produces ATP from ADP in the presence of a proton gradient across the membrane. The A chain is the catalytic subunit. This Thermococcus sibiricus (strain DSM 12597 / MM 739) protein is A-type ATP synthase subunit A.